The primary structure comprises 904 residues: Polycystin-2 (904 aa).

The segment at Met1–Phe102 is disordered. Over Met1–Thr155 the chain is Cytoplasmic. Over residues Pro8–Ala20 the composition is skewed to low complexity. A compositionally biased stretch (basic and acidic residues) spans Glu26–Val38. Over residues Ser86–Gly96 the composition is skewed to low complexity. Residues Val156–Met177 traverse the membrane as a helical segment. The Extracellular portion of the chain corresponds to Val178–Ser404. Asn235, Asn241, and Asn264 each carry an N-linked (GlcNAc...) asparagine glycan. Cys267 and Cys280 are disulfide-bonded. Asn298 carries N-linked (GlcNAc...) asparagine glycosylation. Residues Trp405–Val425 traverse the membrane as a helical segment. The Cytoplasmic segment spans residues Glu426 to Ser441. Residues Leu442 to Ile462 traverse the membrane as a helical segment. At Cys463 to Ala489 the chain is on the extracellular side. Asn478 is a glycosylation site (N-linked (GlcNAc...) asparagine). The helical transmembrane segment at Arg490–Leu510 threads the bilayer. Residues Phe511–Leu534 lie on the Cytoplasmic side of the membrane. The chain crosses the membrane as a helical span at residues Met535 to Phe556. Over Gly557 to Ala568 the chain is Extracellular. Residues Cys569–Phe583 constitute an intramembrane region (pore-forming). Leu578 provides a ligand contact to Ca(2+). Residues Leu578–Asp580 carry the Selectivity filter motif. The Extracellular portion of the chain corresponds to Ser584–Ser591. A helical membrane pass occupies residues Val592–Met612. The Cytoplasmic portion of the chain corresponds to Phe613–Leu904. The EF-hand 1 domain occupies His687 to Glu722. Ca(2+) contacts are provided by Asp700, Asp702, Asp704, Glu706, and Glu711. The span at Thr708–Ser732 shows a compositional bias: basic and acidic residues. Disordered stretches follow at residues Thr708–Gly770 and Glu854–Leu904. Residues Arg740–His759 form a linker region. Positions Ser768–Met786 constitute an EF-hand 2 domain. Residues Gly770–Arg809 adopt a coiled-coil conformation. Positions Leu878–Ser890 are enriched in low complexity.

This sequence belongs to the polycystin family. Homotetramer. Component of the heterotetrameric polycystin channel complex with pkd1; the tetramer contains one pkd1 chain and three pkd2 chains. Interacts with pkd1l1. Phosphorylated. Phosphorylation is important for protein function; a mutant human construct that lacks the N-terminal phosphorylation sites cannot complement a zebrafish pkd2-deficient mutant. Post-translationally, N-glycosylated. The four subunits in a tetramer probably differ in the extent of glycosylation; simultaneous glycosylation of all experimentally validated sites would probably create steric hindrance. In terms of processing, sumoylated by SUMO1; sumoylation regulates PKD2 membrane recycling. In terms of tissue distribution, detected along cilia and at the cilium basal body in Kupffer's vesicle at the 10 somite stage. Detected in heart at 48hpf. Detected in muscle and pronephric kidney at 48 hpf. Detected on trunk muscle sarcolemma and sarcomere, on ependymal cell cilia in brain, at the apical cell membrane in epithelial cells in the ear, at the lateral line organ and olfactory placode at 56 hpf. Detected in adult kidney (at protein level).

It localises to the basolateral cell membrane. Its subcellular location is the cell membrane. It is found in the sarcolemma. The protein resides in the cytoplasm. The protein localises to the myofibril. It localises to the sarcomere. Its subcellular location is the sarcoplasmic reticulum membrane. It is found in the apical cell membrane. The protein resides in the endoplasmic reticulum membrane. The protein localises to the cell projection. It localises to the cilium. Its subcellular location is the cytoskeleton. It is found in the cilium basal body. The protein resides in the cytoplasmic vesicle membrane. It carries out the reaction K(+)(in) = K(+)(out). It catalyses the reaction Na(+)(in) = Na(+)(out). The catalysed reaction is Ca(2+)(in) = Ca(2+)(out). Its activity is regulated as follows. Channel activity is regulated by phosphorylation. Channel activity is regulated by intracellular Ca(2+). In terms of biological role, forms a nonselective cation channel. Can function as a homotetrameric ion channel or can form heteromer with PKD1. Displays distinct function depending on its subcellular localization and regulation by its binding partners. In the primary cilium functions as a cation channel, with a preference for monovalent cations over divalent cations that allows K(+), Na(+) and Ca(2+) influx, with low selectivity for Ca(2+). In the endoplasmic reticulum, likely functions as a K(+) channel to facilitate Ca(2+) release. Required for normal oscillation of Ca(2+) levels within cilia; these oscillations of the intraciliary Ca(2+) levels can trigger cytoplasmic Ca(2+) signaling cascades. Required for normal temporal variation of the intracellular Ca(2+) levels in the heart. Plays a role in fluid-flow mechanosensation. Required for normal specification of the body left-right axis during embryogenesis, most likely via its role in ciliary Ca(2+) oscillations in Kupffer's vesicle. This chain is Polycystin-2, found in Danio rerio (Zebrafish).